The sequence spans 599 residues: MADGGGGEEGSASALRGSARRRGAVQPAGLDADELLTLMHGSDPVKVELNRLENEVRDKDRELGDAHAEIKALRLSERAREKAVEELTAEYEKLDEKLKLTESLLESKNLELKKTNDEKKAAMAAQFAAEATLRRVHAAQKDDDMPPIEAILAPLEAELKLARQEIAKLQDDNRALDRLTKQKEAALLEAERTVEIALAKAAMVDDMQNKNQELMKQIEICQEENKILDRLHRQKVAEVEKLSQTVRELEEAVLAGGAAANAVRDYQRKVQEMNEERKILDRELARAKVTANRVAVVVANEWKDANDKVMPVKQWLEERRFLQGEMQQLRDKLAIAERTARSEAQLKEKYQLRLKVLEDGLRGPPSGSSRPTEGKSIGNGPSRRLSLGGADNMSKISPNGMLARRSPSFNSRSSLSTSSSLVIKHAKGTSRSFDGGTRSLDRGKVLGNGPHLLNRSTDAVRDCETTDDWKAANTEEKGSEATNSSSTDTVSGVLYDMLQKEVISLRKACHEKDQSLKDKDDAIEMLAKKVDTLTKAMEVEAKKMRREVAAMEKEVAAMRLDKDQENKAKRPGNFKGPGTTSQAPHGRNAPRGGLTRNLQ.

The interval 1–30 (MADGGGGEEGSASALRGSARRRGAVQPAGL) is disordered. Positions 43–349 (DPVKVELNRL…ARSEAQLKEK (307 aa)) form a coiled coil. The required for targeting to microtubules stretch occupies residues 227–460 (ILDRLHRQKV…HLLNRSTDAV (234 aa)). Disordered regions lie at residues 357-453 (LEDG…PHLL) and 557-599 (AMRL…RNLQ). Low complexity predominate over residues 404-420 (RRSPSFNSRSSLSTSSS). A coiled-coil region spans residues 533–570 (LTKAMEVEAKKMRREVAAMEKEVAAMRLDKDQENKAKR). Basic and acidic residues predominate over residues 557–568 (AMRLDKDQENKA).

This sequence belongs to the MAP70 family.

The protein resides in the cytoplasm. Its subcellular location is the cytoskeleton. Plant-specific protein that interact with microtubules. This Oryza sativa subsp. japonica (Rice) protein is Microtubule-associated protein 70-2 (MAP70.2).